The following is a 291-amino-acid chain: Oligopeptide transport system permease protein OppC (291 aa).

Transmembrane regions (helical) follow at residues 22–42 (VASL…PPLL), 85–105 (MLIG…VGAI), 116–136 (TLMW…IAIV), 142–162 (NSAN…MISS), 209–229 (ALNV…GFGI), and 247–267 (ATAF…ILVC). The region spanning 81–272 (MQKSMLIGVC…LILVCANLTG (192 aa)) is the ABC transmembrane type-1 domain.

Belongs to the binding-protein-dependent transport system permease family. OppBC subfamily. The complex is composed of an ATP-binding protein (OppD), two transmembrane proteins (OppB and OppC) and a solute-binding protein (OppA).

It is found in the cell inner membrane. Its function is as follows. Part of the ABC transporter complex OppABCD involved in the uptake of oligopeptides. Responsible for the translocation of the substrate across the membrane. In Mycobacterium bovis (strain ATCC BAA-935 / AF2122/97), this protein is Oligopeptide transport system permease protein OppC.